The following is a 425-amino-acid chain: G protein-activated inward rectifier potassium channel 2 (425 aa).

The Cytoplasmic portion of the chain corresponds to 1-91 (MTMAKLTESM…IFTTLVDLKW (91 aa)). A phosphoserine mark is found at S18 and S25. The helical transmembrane segment at 92–116 (RFNLLIFVMVYTVTWLFFGMIWWLI) threads the bilayer. At 117–140 (AYIRGDMDHIEDPSWTPCVTNLNG) the chain is on the extracellular side. The helical; Pore-forming intramembrane region spans 141–152 (FVSAFLFSIETE). Positions 153-159 (TTIGYGY) form an intramembrane region, pore-forming. A Selectivity filter motif is present at residues 154–159 (TIGYGY). The Extracellular portion of the chain corresponds to 160–168 (RVITDKCPE). The chain crosses the membrane as a helical span at residues 169 to 190 (GIILLLIQSVLGSIVNAFMVGC). The Cytoplasmic segment spans residues 191–425 (MFVKISQPKK…VANLENESKV (235 aa)). Positions 392 to 425 (NQHAELETEEEEKNPEELTERNGDVANLENESKV) are disordered. The PDZ-binding signature appears at 422–425 (ESKV).

This sequence belongs to the inward rectifier-type potassium channel (TC 1.A.2.1) family. KCNJ6 subfamily. As to quaternary structure, associates with KCNJ3/GIRK1 or KCNJ5/GRIK4 to form a G-protein-activated heteromultimer pore-forming unit. The resulting inward current is much larger. Interacts (via PDZ-binding motif) with SNX27 (via PDZ domain); the interaction is required for recycling to the plasma membrane when endocytosed and prevent degradation in lysosomes. In terms of tissue distribution, pancreatic beta cells and brain.

The protein resides in the membrane. The enzyme catalyses K(+)(in) = K(+)(out). Its activity is regulated as follows. Activated by phosphatidylinositol 4,5 biphosphate (PtdIns(4,5)P2). Functionally, inward rectifier potassium channels are characterized by a greater tendency to allow potassium to flow into the cell rather than out of it. Their voltage dependence is regulated by the concentration of extracellular potassium; as external potassium is raised, the voltage range of the channel opening shifts to more positive voltages. The inward rectification is mainly due to the blockage of outward current by internal magnesium. This potassium channel may be involved in the regulation of insulin secretion by glucose and/or neurotransmitters acting through G-protein-coupled receptors. In Rattus norvegicus (Rat), this protein is G protein-activated inward rectifier potassium channel 2 (Kcnj6).